The chain runs to 117 residues: MKCLILSFAIFVVLASQATAGNVIIGGVCQDCSPPVAENVVVGGQSYRTGRPGQGTVYINSPGAYLGALDGPIRRTGAGGGGGGGAQYPDGYSGRLPGGTYLHNKDCVGCSISGGGD.

The first 20 residues, 1-20, serve as a signal peptide directing secretion; that stretch reads MKCLILSFAIFVVLASQATA. Cystine bridges form between Cys-29–Cys-32 and Cys-107–Cys-110.

Belongs to the bomanin family. In terms of tissue distribution, hemolymph (at protein level).

The protein localises to the secreted. In terms of biological role, secreted immune-induced peptide induced by Toll signaling. Has a role in resistance to bacterial and fungal infections. The protein is Bomanin Bicipital 1 of Drosophila melanogaster (Fruit fly).